Reading from the N-terminus, the 249-residue chain is Triosephosphate isomerase (249 aa).

9–11 lines the substrate pocket; sequence NWK. H95 functions as the Electrophile in the catalytic mechanism. The Proton acceptor role is filled by E167. Residues G173, S213, and 234 to 235 each bind substrate; that span reads GG.

Belongs to the triosephosphate isomerase family. Homodimer.

Its subcellular location is the cytoplasm. The enzyme catalyses D-glyceraldehyde 3-phosphate = dihydroxyacetone phosphate. The protein operates within carbohydrate biosynthesis; gluconeogenesis. It functions in the pathway carbohydrate degradation; glycolysis; D-glyceraldehyde 3-phosphate from glycerone phosphate: step 1/1. In terms of biological role, involved in the gluconeogenesis. Catalyzes stereospecifically the conversion of dihydroxyacetone phosphate (DHAP) to D-glyceraldehyde-3-phosphate (G3P). The chain is Triosephosphate isomerase from Dictyoglomus turgidum (strain DSM 6724 / Z-1310).